The following is a 228-amino-acid chain: uncharacterized protein (228 aa).

Residues 99 to 207 form the tRNA-binding domain; that stretch reads LANKVPFVVC…PKIKVGKPFI (109 aa).

This is an uncharacterized protein from Mycoplasma genitalium (strain ATCC 33530 / DSM 19775 / NCTC 10195 / G37) (Mycoplasmoides genitalium).